The sequence spans 229 residues: Ferric nitrobindin-like protein (229 aa).

The interval 1–54 is disordered; it reads MSENSTPNNPVVPGAGADGPSLSDSASISGSDAVNLAAEQSKSTAHRNIPGLGD. Low complexity predominate over residues 18–33; that stretch reads DGPSLSDSASISGSDA. A GXWXGXG motif is present at residues 82-88; the sequence is GVWRGEG.

This sequence belongs to the nitrobindin family.

This is Ferric nitrobindin-like protein from Corynebacterium glutamicum (strain R).